The sequence spans 274 residues: Diaminopimelate epimerase (274 aa).

Residues N13, Q45, and N63 each coordinate substrate. The active-site Proton donor is the C72. Residues 73 to 74 (GN), N158, N191, and 209 to 210 (ER) each bind substrate. C218 acts as the Proton acceptor in catalysis. 219–220 (GT) is a substrate binding site.

Belongs to the diaminopimelate epimerase family. In terms of assembly, homodimer.

Its subcellular location is the cytoplasm. It carries out the reaction (2S,6S)-2,6-diaminopimelate = meso-2,6-diaminopimelate. It functions in the pathway amino-acid biosynthesis; L-lysine biosynthesis via DAP pathway; DL-2,6-diaminopimelate from LL-2,6-diaminopimelate: step 1/1. In terms of biological role, catalyzes the stereoinversion of LL-2,6-diaminopimelate (L,L-DAP) to meso-diaminopimelate (meso-DAP), a precursor of L-lysine and an essential component of the bacterial peptidoglycan. In Pelagibacter ubique (strain HTCC1062), this protein is Diaminopimelate epimerase.